A 740-amino-acid chain; its full sequence is DNA-directed RNA polymerase subunit beta' (740 aa).

4 residues coordinate Zn(2+): Cys-65, Cys-67, Cys-103, and Cys-106. Positions 539, 541, and 543 each coordinate Mg(2+).

This sequence belongs to the RNA polymerase beta' chain family. RpoC1 subfamily. As to quaternary structure, in plastids the minimal PEP RNA polymerase catalytic core is composed of four subunits: alpha, beta, beta', and beta''. When a (nuclear-encoded) sigma factor is associated with the core the holoenzyme is formed, which can initiate transcription. Requires Mg(2+) as cofactor. The cofactor is Zn(2+).

Its subcellular location is the plastid. It localises to the chloroplast. The enzyme catalyses RNA(n) + a ribonucleoside 5'-triphosphate = RNA(n+1) + diphosphate. DNA-dependent RNA polymerase catalyzes the transcription of DNA into RNA using the four ribonucleoside triphosphates as substrates. This chain is DNA-directed RNA polymerase subunit beta', found in Ostreococcus tauri.